We begin with the raw amino-acid sequence, 87 residues long: Small ribosomal subunit protein bS20 (87 aa).

Positions 1-26 (MANIKSAKKRAVQSEKRRKHNASRRS) are disordered.

This sequence belongs to the bacterial ribosomal protein bS20 family.

Functionally, binds directly to 16S ribosomal RNA. This chain is Small ribosomal subunit protein bS20, found in Yersinia enterocolitica serotype O:8 / biotype 1B (strain NCTC 13174 / 8081).